The sequence spans 466 residues: Histidine--tRNA ligase (466 aa).

It belongs to the class-II aminoacyl-tRNA synthetase family. Homodimer.

It localises to the cytoplasm. It carries out the reaction tRNA(His) + L-histidine + ATP = L-histidyl-tRNA(His) + AMP + diphosphate + H(+). The polypeptide is Histidine--tRNA ligase (hisS) (Xylella fastidiosa (strain 9a5c)).